A 98-amino-acid polypeptide reads, in one-letter code: Protein translation factor SUI1 homolog (98 aa).

It belongs to the SUI1 family.

In Thermococcus onnurineus (strain NA1), this protein is Protein translation factor SUI1 homolog.